Here is a 123-residue protein sequence, read N- to C-terminus: Small ribosomal subunit protein uS8 (123 aa).

Belongs to the universal ribosomal protein uS8 family. Part of the 30S ribosomal subunit. Contacts proteins S5 and S12.

Its function is as follows. One of the primary rRNA binding proteins, it binds directly to 16S rRNA central domain where it helps coordinate assembly of the platform of the 30S subunit. The protein is Small ribosomal subunit protein uS8 (rpsH) of Carsonella ruddii (strain PV).